A 336-amino-acid chain; its full sequence is Ferrochelatase (336 aa).

Positions 206 and 287 each coordinate Fe cation.

Belongs to the ferrochelatase family.

The protein localises to the cytoplasm. It catalyses the reaction heme b + 2 H(+) = protoporphyrin IX + Fe(2+). It functions in the pathway porphyrin-containing compound metabolism; protoheme biosynthesis; protoheme from protoporphyrin-IX: step 1/1. In terms of biological role, catalyzes the ferrous insertion into protoporphyrin IX. In Neisseria meningitidis serogroup A / serotype 4A (strain DSM 15465 / Z2491), this protein is Ferrochelatase.